A 155-amino-acid polypeptide reads, in one-letter code: MNYHQYYPIDVVNGPGTRCTLFVSGCVHQCKGCYNQSTWSLSSGHRYTQEMEDKIIADLKDTRIKRRGLSLSGGDPMHPANLSAVLQLVQRVKTECPDKDIWLWTGYTLAELDDSQQALLPYIDVLVDGKFIQEQADPGLEWRGSANQVIHRFTL.

Cysteine 26, cysteine 30, and cysteine 33 together coordinate [4Fe-4S] cluster. S-adenosyl-L-methionine contacts are provided by residues 32–34 and glycine 74; that span reads GCY.

It belongs to the organic radical-activating enzymes family. As to quaternary structure, forms a tetramer composed of two NrdD and two NrdG subunits. [4Fe-4S] cluster serves as cofactor.

The protein resides in the cytoplasm. It catalyses the reaction glycyl-[protein] + reduced [flavodoxin] + S-adenosyl-L-methionine = glycin-2-yl radical-[protein] + semiquinone [flavodoxin] + 5'-deoxyadenosine + L-methionine + H(+). Its function is as follows. Activation of anaerobic ribonucleoside-triphosphate reductase under anaerobic conditions by generation of an organic free radical, using S-adenosylmethionine and reduced flavodoxin as cosubstrates to produce 5'-deoxy-adenosine. This Vibrio cholerae serotype O1 (strain ATCC 39315 / El Tor Inaba N16961) protein is Anaerobic ribonucleoside-triphosphate reductase-activating protein (nrdG).